Here is a 293-residue protein sequence, read N- to C-terminus: Formamidopyrimidine-DNA glycosylase (293 aa).

Proline 2 acts as the Schiff-base intermediate with DNA in catalysis. Glutamate 3 acts as the Proton donor in catalysis. Lysine 58 functions as the Proton donor; for beta-elimination activity in the catalytic mechanism. DNA is bound by residues histidine 104, arginine 123, and lysine 166. Residues 257 to 293 (AVYDREGERCRTPGCNGTVKRLVQNGRSTFWCSGCQT) form an FPG-type zinc finger. The active-site Proton donor; for delta-elimination activity is arginine 283.

It belongs to the FPG family. As to quaternary structure, monomer. The cofactor is Zn(2+).

It catalyses the reaction Hydrolysis of DNA containing ring-opened 7-methylguanine residues, releasing 2,6-diamino-4-hydroxy-5-(N-methyl)formamidopyrimidine.. The enzyme catalyses 2'-deoxyribonucleotide-(2'-deoxyribose 5'-phosphate)-2'-deoxyribonucleotide-DNA = a 3'-end 2'-deoxyribonucleotide-(2,3-dehydro-2,3-deoxyribose 5'-phosphate)-DNA + a 5'-end 5'-phospho-2'-deoxyribonucleoside-DNA + H(+). Involved in base excision repair of DNA damaged by oxidation or by mutagenic agents. Acts as a DNA glycosylase that recognizes and removes damaged bases. Has a preference for oxidized purines, such as 7,8-dihydro-8-oxoguanine (8-oxoG). Has AP (apurinic/apyrimidinic) lyase activity and introduces nicks in the DNA strand. Cleaves the DNA backbone by beta-delta elimination to generate a single-strand break at the site of the removed base with both 3'- and 5'-phosphates. This Rhodopseudomonas palustris (strain HaA2) protein is Formamidopyrimidine-DNA glycosylase.